The sequence spans 98 residues: Aspartyl/glutamyl-tRNA(Asn/Gln) amidotransferase subunit C (98 aa).

Positions 70 to 98 are disordered; it reads PSLTPEQALSGAPAQEQQRFKVPQILGED.

It belongs to the GatC family. In terms of assembly, heterotrimer of A, B and C subunits.

The catalysed reaction is L-glutamyl-tRNA(Gln) + L-glutamine + ATP + H2O = L-glutaminyl-tRNA(Gln) + L-glutamate + ADP + phosphate + H(+). It carries out the reaction L-aspartyl-tRNA(Asn) + L-glutamine + ATP + H2O = L-asparaginyl-tRNA(Asn) + L-glutamate + ADP + phosphate + 2 H(+). In terms of biological role, allows the formation of correctly charged Asn-tRNA(Asn) or Gln-tRNA(Gln) through the transamidation of misacylated Asp-tRNA(Asn) or Glu-tRNA(Gln) in organisms which lack either or both of asparaginyl-tRNA or glutaminyl-tRNA synthetases. The reaction takes place in the presence of glutamine and ATP through an activated phospho-Asp-tRNA(Asn) or phospho-Glu-tRNA(Gln). The chain is Aspartyl/glutamyl-tRNA(Asn/Gln) amidotransferase subunit C from Streptomyces avermitilis (strain ATCC 31267 / DSM 46492 / JCM 5070 / NBRC 14893 / NCIMB 12804 / NRRL 8165 / MA-4680).